A 305-amino-acid chain; its full sequence is UDP-3-O-acyl-N-acetylglucosamine deacetylase (305 aa).

3 residues coordinate Zn(2+): His-79, His-238, and Asp-242. His-265 serves as the catalytic Proton donor.

The protein belongs to the LpxC family. Requires Zn(2+) as cofactor.

It carries out the reaction a UDP-3-O-[(3R)-3-hydroxyacyl]-N-acetyl-alpha-D-glucosamine + H2O = a UDP-3-O-[(3R)-3-hydroxyacyl]-alpha-D-glucosamine + acetate. Its pathway is glycolipid biosynthesis; lipid IV(A) biosynthesis; lipid IV(A) from (3R)-3-hydroxytetradecanoyl-[acyl-carrier-protein] and UDP-N-acetyl-alpha-D-glucosamine: step 2/6. Functionally, catalyzes the hydrolysis of UDP-3-O-myristoyl-N-acetylglucosamine to form UDP-3-O-myristoylglucosamine and acetate, the committed step in lipid A biosynthesis. This is UDP-3-O-acyl-N-acetylglucosamine deacetylase from Shigella boydii serotype 18 (strain CDC 3083-94 / BS512).